Consider the following 378-residue polypeptide: tRNA (guanine(37)-N(1))-methyltransferase (378 aa).

Residues His-196, 234–235 (DL), 262–263 (DA), and Asn-282 contribute to the S-adenosyl-L-methionine site.

It belongs to the class I-like SAM-binding methyltransferase superfamily. TRM5/TYW2 family. In terms of assembly, monomer.

The protein resides in the mitochondrion matrix. The protein localises to the nucleus. It localises to the cytoplasm. It carries out the reaction guanosine(37) in tRNA + S-adenosyl-L-methionine = N(1)-methylguanosine(37) in tRNA + S-adenosyl-L-homocysteine + H(+). Its function is as follows. Specifically methylates the N1 position of guanosine-37 in various cytoplasmic and mitochondrial tRNAs. Methylation is not dependent on the nature of the nucleoside 5' of the target nucleoside. This is the first step in the biosynthesis of wybutosine (yW), a modified base adjacent to the anticodon of tRNAs and required for accurate decoding. The chain is tRNA (guanine(37)-N(1))-methyltransferase from Trichomonas vaginalis (strain ATCC PRA-98 / G3).